Here is a 298-residue protein sequence, read N- to C-terminus: Lipoyl synthase (298 aa).

7 residues coordinate [4Fe-4S] cluster: Cys40, Cys45, Cys51, Cys67, Cys71, Cys74, and Ser280. Residues 53–269 (AVRKTATFMI…KEIALSKGFS (217 aa)) form the Radical SAM core domain.

It belongs to the radical SAM superfamily. Lipoyl synthase family. Requires [4Fe-4S] cluster as cofactor.

It is found in the cytoplasm. The catalysed reaction is [[Fe-S] cluster scaffold protein carrying a second [4Fe-4S](2+) cluster] + N(6)-octanoyl-L-lysyl-[protein] + 2 oxidized [2Fe-2S]-[ferredoxin] + 2 S-adenosyl-L-methionine + 4 H(+) = [[Fe-S] cluster scaffold protein] + N(6)-[(R)-dihydrolipoyl]-L-lysyl-[protein] + 4 Fe(3+) + 2 hydrogen sulfide + 2 5'-deoxyadenosine + 2 L-methionine + 2 reduced [2Fe-2S]-[ferredoxin]. It participates in protein modification; protein lipoylation via endogenous pathway; protein N(6)-(lipoyl)lysine from octanoyl-[acyl-carrier-protein]. Functionally, catalyzes the radical-mediated insertion of two sulfur atoms into the C-6 and C-8 positions of the octanoyl moiety bound to the lipoyl domains of lipoate-dependent enzymes, thereby converting the octanoylated domains into lipoylated derivatives. This Bacillus cytotoxicus (strain DSM 22905 / CIP 110041 / 391-98 / NVH 391-98) protein is Lipoyl synthase.